The following is a 172-amino-acid chain: Protein GrpE (172 aa).

Residues 1 to 23 (MNQDHPECDSEELTQNSPETDPL) are disordered.

It belongs to the GrpE family. Homodimer.

It is found in the cytoplasm. Participates actively in the response to hyperosmotic and heat shock by preventing the aggregation of stress-denatured proteins, in association with DnaK and GrpE. It is the nucleotide exchange factor for DnaK and may function as a thermosensor. Unfolded proteins bind initially to DnaJ; upon interaction with the DnaJ-bound protein, DnaK hydrolyzes its bound ATP, resulting in the formation of a stable complex. GrpE releases ADP from DnaK; ATP binding to DnaK triggers the release of the substrate protein, thus completing the reaction cycle. Several rounds of ATP-dependent interactions between DnaJ, DnaK and GrpE are required for fully efficient folding. In Xylella fastidiosa (strain M23), this protein is Protein GrpE.